Consider the following 959-residue polypeptide: Nucleoporin NUP100/NSP100 (959 aa).

Residues 1–104 are disordered; that stretch reads MFGNNRPMFG…NSSNASNGNT (104 aa). FG repeat units follow at residues 2-3, 9-10, and glycine 17; these read FG. Residues 12–36 show a composition bias toward polar residues; it reads SNLSFGSNTSSFGGQQSQQPNSLFG. One copy of the SLFG 1; approximate repeat lies at 21-24; that stretch reads SSFG. The SLFG 2 repeat unit spans residues 33-36; it reads SLFG. Low complexity predominate over residues 37-48; the sequence is NSNNNNNSTSNN. Residues 51 to 54 form an SLFG 3; approximate repeat; it reads SGFG. Low complexity-rich tracts occupy residues 56 to 81 and 92 to 104; these read FTSAAGSNSNSLFGNNNTQNNGAFGQ and GSLNSSNASNGNT. One copy of the SLFG 4 repeat lies at 66–69; that stretch reads SLFG. One copy of the GLFG 1; approximate repeat lies at 77–80; the sequence is GAFG. An SLFG 5; approximate repeat occupies 89-92; it reads SPFG. One copy of the FG 4 repeat lies at 105–106; sequence FG. The GLFG 2; approximate repeat unit spans residues 112–115; sequence GSFG. Positions 121 to 136 are enriched in low complexity; sequence AFNNNSNSTNSPFGFN. The tract at residues 121 to 172 is disordered; sequence AFNNNSNSTNSPFGFNKPNTGGTLFGSQNNNSAGTSSLFGGQSTSTTGTFGN. One copy of the SLFG 6; approximate repeat lies at 131–134; sequence SPFG. The segment covering 137–153 has biased composition (polar residues); the sequence is KPNTGGTLFGSQNNNSA. One copy of the FG 5 repeat lies at 145–146; sequence FG. Residues 154–172 show a composition bias toward low complexity; the sequence is GTSSLFGGQSTSTTGTFGN. One copy of the SLFG 7 repeat lies at 157-160; sequence SLFG. The stretch at 168–171 is one GLFG 3; approximate repeat; that stretch reads GTFG. Residues 175 to 178 form an SLFG 8; approximate repeat; the sequence is SSFG. Residues 189–190 form an FG 6 repeat; it reads FG. The segment at 190–394 is disordered; that stretch reads GAGNNSQSNT…NNQQQQSTGL (205 aa). Polar residues predominate over residues 192–245; that stretch reads GNNSQSNTTGSLFGNQQSSAFGTNNQQGSLFGQQSQNTNNAFGNQNQLGGSSFG. The SLFG 9 repeat unit spans residues 202-205; sequence SLFG. One copy of the SLFG 10; approximate repeat lies at 210 to 213; sequence SAFG. Residues 220–223 form an SLFG 11 repeat; that stretch reads SLFG. An FG 7 repeat occupies 233 to 234; the sequence is FG. Residues 242–245 form an SLFG 12; approximate repeat; the sequence is SSFG. The stretch at 253 to 256 is one SLFG 13 repeat; sequence SLFG. Low complexity predominate over residues 259-293; that stretch reads NNTLGNTTNNRNGLFGQMNSSNQGSSNSGLFGQNS. GLFG repeat units lie at residues 271–274 and 287–290; these read GLFG. Over residues 294-303 the composition is skewed to polar residues; the sequence is MNSSTQGVFG. Residues 300–303 form a GLFG 6; approximate repeat; sequence GVFG. Residues 304-317 show a composition bias toward low complexity; that stretch reads QNNNQMQINGNNNN. Residues 318 to 321 form an SLFG 14 repeat; that stretch reads SLFG. GLFG repeat units follow at residues 333 to 336, 345 to 348, 358 to 361, 379 to 382, and 393 to 396; these read GLFG. Over residues 336 to 352 the composition is skewed to low complexity; it reads GQNNQQQGSGLFGQNSQ. Over residues 353–377 the composition is skewed to polar residues; that stretch reads TSGSSGLFGQNNQKQPNTFTQSNTG. 3 SLFG repeats span residues 405-408, 417-420, and 436-439; these read SLFG. The stretch at 448 to 449 is one FG 8 repeat; that stretch reads FG. The stretch at 462–465 is one SLFG 18 repeat; it reads SLFG. An SLFG 19; approximate repeat occupies 474–477; it reads SLFG. GLFG repeat units lie at residues 490 to 493, 506 to 509, and 523 to 526; these read GLFG. One copy of the FG 9 repeat lies at 542–543; that stretch reads FG. A GLFG 15 repeat occupies 550 to 553; sequence GLFG. One copy of the FG 10 repeat lies at 569 to 570; the sequence is FG. Disordered stretches follow at residues 672-697 and 745-794; these read TLERSDRGSSTSNSITDPESSYLNSN and DDQA…PMIE. The segment covering 679–697 has biased composition (polar residues); the sequence is GSSTSNSITDPESSYLNSN. Residues 757 to 775 show a composition bias toward basic and acidic residues; the sequence is LTEKAHSPQTDLKDDHDES. A phosphoserine mark is found at serine 763 and serine 783. Polar residues predominate over residues 777–790; sequence PDPQSKSPNGSTSI. In terms of domain architecture, Peptidase S59 spans 814-956; the sequence is KNNYYISPSI…GTYSYTIDHP (143 aa). The tract at residues 816-955 is nucleoporin RNA-binding motif (NRM); it reads NYYISPSIET…TGTYSYTIDH (140 aa).

This sequence belongs to the nucleoporin GLFG family. Component of the nuclear pore complex (NPC). NPC constitutes the exclusive means of nucleocytoplasmic transport. NPCs allow the passive diffusion of ions and small molecules and the active, nuclear transport receptor-mediated bidirectional transport of macromolecules such as proteins, RNAs, ribonucleoparticles (RNPs), and ribosomal subunits across the nuclear envelope. Due to its 8-fold rotational symmetry, all subunits are present with 8 copies or multiples thereof. Through its FG repeats NUP100 interacts with numerous karyopherins including KAP95, and MEX67.

It localises to the nucleus. It is found in the nuclear pore complex. The protein localises to the nucleus membrane. Functionally, functions as a component of the nuclear pore complex (NPC). NPC components, collectively referred to as nucleoporins (NUPs), can play the role of both NPC structural components and of docking or interaction partners for transiently associated nuclear transport factors. Active directional transport is assured by both, a Phe-Gly (FG) repeat affinity gradient for these transport factors across the NPC and a transport cofactor concentration gradient across the nuclear envelope (GSP1 and GSP2 GTPases associated predominantly with GTP in the nucleus, with GDP in the cytoplasm). NUP100 plays an important role in several nuclear export and import pathways including poly(A)+ RNA and protein transport. This chain is Nucleoporin NUP100/NSP100 (NUP100), found in Saccharomyces cerevisiae (strain ATCC 204508 / S288c) (Baker's yeast).